We begin with the raw amino-acid sequence, 340 residues long: HPr kinase/phosphorylase (340 aa).

Residues His-153 and Lys-174 contribute to the active site. 168–175 (GRSGIGKS) is an ATP binding site. Ser-175 serves as a coordination point for Mg(2+). The active-site Proton acceptor; for phosphorylation activity. Proton donor; for dephosphorylation activity is the Asp-192. Positions 216-225 (MEIRGLGIID) are important for the catalytic mechanism of both phosphorylation and dephosphorylation. Glu-217 contributes to the Mg(2+) binding site. Residue Arg-258 is part of the active site. Positions 279–284 (PIYPGK) are important for the catalytic mechanism of dephosphorylation.

This sequence belongs to the HPrK/P family. Homohexamer. Requires Mg(2+) as cofactor.

The catalysed reaction is [HPr protein]-L-serine + ATP = [HPr protein]-O-phospho-L-serine + ADP + H(+). The enzyme catalyses [HPr protein]-O-phospho-L-serine + phosphate + H(+) = [HPr protein]-L-serine + diphosphate. Its function is as follows. Catalyzes the ATP- as well as the pyrophosphate-dependent phosphorylation of a specific serine residue in HPr, a phosphocarrier protein of the phosphoenolpyruvate-dependent sugar phosphotransferase system (PTS). HprK/P also catalyzes the pyrophosphate-producing, inorganic phosphate-dependent dephosphorylation (phosphorolysis) of seryl-phosphorylated HPr (P-Ser-HPr). This is HPr kinase/phosphorylase from Chloroherpeton thalassium (strain ATCC 35110 / GB-78).